A 257-amino-acid polypeptide reads, in one-letter code: Hydroxyacylglutathione hydrolase (257 aa).

Residues H56, H58, D60, H61, H112, D131, and H169 each coordinate Zn(2+).

It belongs to the metallo-beta-lactamase superfamily. Glyoxalase II family. In terms of assembly, monomer. Zn(2+) is required as a cofactor.

It catalyses the reaction an S-(2-hydroxyacyl)glutathione + H2O = a 2-hydroxy carboxylate + glutathione + H(+). It functions in the pathway secondary metabolite metabolism; methylglyoxal degradation; (R)-lactate from methylglyoxal: step 2/2. Its function is as follows. Thiolesterase that catalyzes the hydrolysis of S-D-lactoyl-glutathione to form glutathione and D-lactic acid. This is Hydroxyacylglutathione hydrolase from Ectopseudomonas mendocina (strain ymp) (Pseudomonas mendocina).